The chain runs to 693 residues: MACEIMPLRSSQEDERPLSPFYLSAHVSQVSNVSTTGELLERTIRSAVEEHLFDVSNAGDQSSEDSEPGPSSASSIPTRQRGHQFKKQDDVWHGCDKELINKENIPSGFSGCAECILNSQEAERFQDDICDYVGERSKPKRQKSSSRLAKLSDNHDGALSMESLSSMQSQETLEPEAAEPLSSESKEIERGGRDTQHCENPTMKIQEHPSLSDTKQQRNQDGEDQQESFVPDMPQLDLTALCDEKTWEEPIPSWQPENADSDEARLSPQAGRLIHQFLDEDSDPMLSPRFYAYGQSRQYLDDTEVPPSPPNSHSFMRRRSSSLGSYDDEQEDLTPVQLTRRIQTLKKKIRKFEDRFEEERKYRPSHSDKAANPEVLKWTNDLAKFRKQLKESKLKISEEDLTPRTRQRSNTLPKSFGSQLEKEDEKKQELLDKAIRPSVEATLEGILRKLQEKRVESSRPEDIKDMTKDQIANEKVALQKALLYYESIHGRPVTKTERQIMKPLYDRYRLVKQILSRASTVPIIGSPSSKRRSPSLQPIIEGETASFFKEIKEQEEGSEDDSSTKPDFAVTLKTDCSAHCFLDQLEDDADGFISPMDDKMPSKCSQDSGLSNLHSASIPELLEYLQEMREEKKMIRKKLHDFEDNFFRQNGRNVQKEDRTPMAEEYNEYKHIKAKLRLLEVLISKRDSDSKSM.

Ser19 bears the Phosphoserine mark. 2 disordered regions span residues 56–89 and 136–233; these read SNAG…KKQD and RSKP…VPDM. Residues 69–78 are compositionally biased toward polar residues; it reads GPSSASSIPT. A compositionally biased stretch (low complexity) spans 159–171; it reads LSMESLSSMQSQE. The segment covering 184–197 has biased composition (basic and acidic residues); sequence ESKEIERGGRDTQH. Residues Ser267 and Ser287 each carry the phosphoserine modification. Disordered stretches follow at residues 302–331 and 396–424; these read DTEV…DEQE and ISEE…EKED. Ser397 is subject to Phosphoserine. Position 402 is a phosphothreonine (Thr402). Polar residues predominate over residues 408-418; it reads RSNTLPKSFGS.

The protein belongs to the FAM13 family. In terms of assembly, interacts with ANXA2. Expressed in the mammary gland, with similar levels at all stages of development, including pregnancy, lactation and involution.

Its function is as follows. (Microbial infection) Plays a role in the clearance of Pseudomonas aeruginosa by macrophages. In complex with ANXA2, promotes activation of Rho GTPases following P.aeruginosa infection. This chain is Protein FAM13A (Fam13a), found in Mus musculus (Mouse).